The chain runs to 194 residues: uncharacterized protein (194 aa).

The disordered stretch occupies residues 62–93; the sequence is GGAGRRTSKAQRVHPQPSHQRQPPPPQHPGPY.

As to expression, expressed most abundantly in the brain at protein level. Present in cortex, cerebellum and midbrain. Found in neurons. Elevated expressions detected in Alzheimer brain samples. Also expressed in testis.

The protein resides in the cytoplasm. This is an uncharacterized protein from Homo sapiens (Human).